Here is a 710-residue protein sequence, read N- to C-terminus: Effector protein AvrPphD (710 aa).

Residues 1–15 are compositionally biased toward polar residues; it reads MNPLRSIQHNITTPP. Disordered regions lie at residues 1–36, 136–155, and 173–207; these read MNPL…HPKR, ISFD…SVLS, and SSSL…DSGS.

Its subcellular location is the secreted. Effector protein involved in non-host recognition and able to elicit hypersensitive response (HR). This chain is Effector protein AvrPphD (avrPphD), found in Pseudomonas savastanoi pv. phaseolicola (Pseudomonas syringae pv. phaseolicola).